A 158-amino-acid polypeptide reads, in one-letter code: Pycsar effector protein SaPycTM (158 aa).

Helical transmembrane passes span 20–40 (FADAKALAIISINGFILNFNF), 53–73 (IFNFTAFILLIITIILAAFAV), and 136–156 (VFIISALGYSCLLFSSIFQII).

The protein resides in the cell membrane. Its function is as follows. Pycsar (pyrimidine cyclase system for antiphage resistance) provides immunity against bacteriophage. The pyrimidine cyclase (PycC) synthesizes cyclic nucleotides in response to infection; these serve as specific second messenger signals. The signals activate the adjacent effector, leading to bacterial cell death and abortive phage infection. A clade E Pycsar system. The effector gene of a two-gene Pycsar system. Expression of this and adjacent SaPycC cytidylate cyclase (AC P0DV38) probably confers resistance to bacteriophage. The genes are probably only expressed in response to bacteriophage infection. Probably only responds to cCMP (produced by its cognate NTP cyclase), acts by impairing membrane integrity. The protein is Pycsar effector protein SaPycTM of Staphylococcus aureus.